Here is a 226-residue protein sequence, read N- to C-terminus: PKHD-type hydroxylase mma_3618 (226 aa).

The region spanning 78–178 (RYMPPLFNRY…RISSFFWVQS (101 aa)) is the Fe2OG dioxygenase domain. Residues His-96, Asp-98, and His-159 each coordinate Fe cation. A 2-oxoglutarate-binding site is contributed by Arg-169.

Fe(2+) serves as cofactor. It depends on L-ascorbate as a cofactor.

This chain is PKHD-type hydroxylase mma_3618, found in Janthinobacterium sp. (strain Marseille) (Minibacterium massiliensis).